The sequence spans 536 residues: Allene oxide synthase, chloroplastic (536 aa).

Residues Met1 to Thr58 constitute a chloroplast transit peptide. Residues Lys151, His182, and Lys186 each contribute to the heme b site. Positions 262, 339, and 345 each coordinate (13S)-hydroperoxy-(9Z,11E)-octadecadienoate. Residue Asn339 coordinates (13S)-hydroperoxy-(9Z,11E,15Z)-octadecatrienoate. Residues Lys487 and Cys489 each contribute to the heme b site.

The protein belongs to the cytochrome P450 family. It depends on heme b as a cofactor.

The protein resides in the plastid. It is found in the chloroplast. The catalysed reaction is (13S)-hydroperoxy-(9Z,11E,15Z)-octadecatrienoate = (9Z,13S,15Z)-12,13-epoxyoctadeca-9,11,15-trienoate + H2O. It catalyses the reaction (13S)-hydroperoxy-(9Z,11E)-octadecadienoate = (9Z,13S)-12,13-epoxyoctadeca-9,11-dienoate + H2O. The protein operates within lipid metabolism; oxylipin biosynthesis. In terms of biological role, cytochrome P450 enzyme involved in the biosynthesis of oxylipin jasmonates, important phytohormones acting as growth regulators and signaling molecules for plant defense. Functions as an allene oxide synthase that converts hydroperoxy fatty acids to unstable allene epoxides. Catalyzes the dehydration of 13-HPOTE ((13S)-hydroperoxy-(9Z,11E,15Z)-octadecatrienoate), as well as 13-HPODE ((13S)-hydroperoxy-(9Z,11E)-octadecadienoate). In Linum usitatissimum (Flax), this protein is Allene oxide synthase, chloroplastic (CYP74A).